The primary structure comprises 215 residues: Adenylate kinase (215 aa).

An ATP-binding site is contributed by 10–15 (GAGKGT). The interval 30–58 (STGDMLREAKRSGTLEKRYLDIMDSGGLL) is NMP. Residues threonine 31, arginine 36, 56–58 (GLL), 84–87 (GFPR), and glutamine 91 each bind AMP. An LID region spans residues 128–158 (HRRTDKRSGQIYHLVYNPPPPGAELEHRADD). ATP contacts are provided by residues arginine 129 and 138-139 (IY). 2 residues coordinate AMP: arginine 155 and arginine 166. Residue glycine 194 participates in ATP binding.

Belongs to the adenylate kinase family. As to quaternary structure, monomer.

The protein resides in the cytoplasm. The catalysed reaction is AMP + ATP = 2 ADP. The protein operates within purine metabolism; AMP biosynthesis via salvage pathway; AMP from ADP: step 1/1. Catalyzes the reversible transfer of the terminal phosphate group between ATP and AMP. Plays an important role in cellular energy homeostasis and in adenine nucleotide metabolism. This is Adenylate kinase from Sorangium cellulosum (strain So ce56) (Polyangium cellulosum (strain So ce56)).